We begin with the raw amino-acid sequence, 236 residues long: Rab-like protein 3 (236 aa).

Residues 1 to 236 (MASLDRVKVL…GGTLKSLHYD (236 aa)) are small GTPase-like. GTP contacts are provided by residues 16 to 21 (GVGKSS), 148 to 150 (KLD), and 179 to 180 (DC).

The protein belongs to the small GTPase superfamily. Rab family. In terms of assembly, homodimer. Interacts with GPR89; the interaction stabilizes GPR89. Interacts with RAP1GDS1.

Functionally, required for KRAS signaling regulation and modulation of cell proliferation. Regulator of KRAS prenylation, and probably prenylation of other small GTPases. Required for lymphocyte development and function. Not required for myeloid cell development. The chain is Rab-like protein 3 (RABL3) from Bos taurus (Bovine).